Reading from the N-terminus, the 338-residue chain is MNELLKSCVNGRTLNEIEAHSIMRDMMTGSLSAAEIGGLLSVLAYRGETAEEITGFVRAMREQAHTIDGPEHVVDTCGTGGDGSSTFNISTAAAIIASSAGAKIAKHGNRSVSSKSGSADVLEYLGVSIQTSPEETIKSIERRNMGFLYAPSYHSSMKHVAGARKDLAFRTVFNLLGPLSNPMKAKRQVIGVYSIEKAKLMARALEAFEPEHVLFVSSRDGLDELSITSPTDVIELKGGKTYEYTVEPGDVGLPLGRLRDIQVATPEESGRLIVDILKNRGPDSAVHIAAFNAGAALYVAEQAADLKEGVALALEAVAGGEALNQLERLKQKEEELYA.

5-phospho-alpha-D-ribose 1-diphosphate-binding positions include G78, 81-82 (GD), T86, 88-91 (NIST), 106-114 (KHGNRSVSS), and S118. G78 provides a ligand contact to anthranilate. S90 is a Mg(2+) binding site. An anthranilate-binding site is contributed by N109. An anthranilate-binding site is contributed by R164. Mg(2+) contacts are provided by D223 and E224.

The protein belongs to the anthranilate phosphoribosyltransferase family. Homodimer. Requires Mg(2+) as cofactor.

It carries out the reaction N-(5-phospho-beta-D-ribosyl)anthranilate + diphosphate = 5-phospho-alpha-D-ribose 1-diphosphate + anthranilate. It participates in amino-acid biosynthesis; L-tryptophan biosynthesis; L-tryptophan from chorismate: step 2/5. Functionally, catalyzes the transfer of the phosphoribosyl group of 5-phosphorylribose-1-pyrophosphate (PRPP) to anthranilate to yield N-(5'-phosphoribosyl)-anthranilate (PRA). This Bacillus licheniformis (strain ATCC 14580 / DSM 13 / JCM 2505 / CCUG 7422 / NBRC 12200 / NCIMB 9375 / NCTC 10341 / NRRL NRS-1264 / Gibson 46) protein is Anthranilate phosphoribosyltransferase.